The primary structure comprises 1221 residues: Reverse gyrase subunit B (1221 aa).

An RG N-terminal-type zinc finger spans residues Asn56–Arg97. Positions 66, 69, 85, and 88 each coordinate Zn(2+). ATP is bound by residues Gln161 and Ala178 to Thr185. A Helicase ATP-binding domain is found at Thr165 to Glu400. Residues Asp284 to Asp287 carry the DEAD box motif. The region spanning Ala424–Leu600 is the Helicase C-terminal domain. Residues Ser779–Val935 enclose the Toprim domain. Position 785 (Glu785) interacts with Mg(2+). The RG C-terminal-type zinc-finger motif lies at Leu856–Lys882. 4 residues coordinate Zn(2+): Cys859, Cys862, Cys872, and Cys875. Asp904 is a binding site for Mg(2+). The Topo IA-type catalytic domain maps to Asp953–Arg1221.

The protein in the C-terminal section; belongs to the type IA topoisomerase family. In the N-terminal section; belongs to the DEAD box helicase family. DDVD subfamily. In terms of assembly, heterodimer of an RgyrA and RgyrB subunit. The topoisomerase domain is shared between the two subunits. Zn(2+) serves as cofactor. Mg(2+) is required as a cofactor. Post-translationally, the N-terminus is partially blocked.

It localises to the cytoplasm. It carries out the reaction ATP + H2O = ADP + phosphate + H(+). Functionally, modifies the topological state of DNA by introducing positive supercoils in an ATP-dependent process; dATP also allows positive supercoiling. Increases the linking number in steps of +1. Only this subunit binds ATP, it does so in a DNA- and RgyA-independent manner. Hydrolyzes ATP only in the presence of DNA. The RgyA subunit transiently cleaves a single DNA strand and remains covalently bound to the 5' DNA end probably through a tyrosine residue. It changes linking number in steps of one, and nicks DNA preferentially at 5'-CNNN | 3'-sites with a strong preference for 4 pyrimidine residues. There are about 1000 heterodimers per cell. May be involved in rewinding the DNA strands in the regions of the chromosome that have opened up to allow transcription or replication. In terms of biological role, this subunit expressed in E.coli only has DNA-dependent ATPase activity at 80 degrees Celsius. Reverse gyrase activity is reconstituted after incubation at 80 degrees Celsius for 5 minutes, positive supercoiling requires ATP and Mg(2+). In the presence of ATP it binds and nicks substrate but does not make closed product. This chain is Reverse gyrase subunit B, found in Methanopyrus kandleri (strain AV19 / DSM 6324 / JCM 9639 / NBRC 100938).